A 296-amino-acid polypeptide reads, in one-letter code: 33 kDa chaperonin (296 aa).

Disulfide bonds link C233–C235 and C267–C270.

The protein belongs to the HSP33 family. Post-translationally, under oxidizing conditions two disulfide bonds are formed involving the reactive cysteines. Under reducing conditions zinc is bound to the reactive cysteines and the protein is inactive.

It localises to the cytoplasm. In terms of biological role, redox regulated molecular chaperone. Protects both thermally unfolding and oxidatively damaged proteins from irreversible aggregation. Plays an important role in the bacterial defense system toward oxidative stress. The protein is 33 kDa chaperonin of Actinobacillus pleuropneumoniae serotype 5b (strain L20).